The chain runs to 338 residues: Large ribosomal subunit protein uL10 (338 aa).

The tract at residues 297–338 is disordered; sequence PSAQQTQTQQSTAEEKKEEKKEEEKKGPSEEEIGSGLASLFG. The segment covering 298–308 has biased composition (low complexity); that stretch reads SAQQTQTQQST. Basic and acidic residues predominate over residues 309-325; it reads AEEKKEEKKEEEKKGPS.

It belongs to the universal ribosomal protein uL10 family. As to quaternary structure, part of the 50S ribosomal subunit. Forms part of the ribosomal stalk which helps the ribosome interact with GTP-bound translation factors. Forms a heptameric L10(L12)2(L12)2(L12)2 complex, where L10 forms an elongated spine to which the L12 dimers bind in a sequential fashion.

Functionally, forms part of the ribosomal stalk, playing a central role in the interaction of the ribosome with GTP-bound translation factors. The chain is Large ribosomal subunit protein uL10 from Saccharolobus islandicus (strain Y.N.15.51 / Yellowstone #2) (Sulfolobus islandicus).